The primary structure comprises 188 residues: Ribosome maturation factor RimM (188 aa).

The PRC barrel domain occupies 93–166 (EDEYYDHQLI…RAVIDPPPGL (74 aa)).

The protein belongs to the RimM family. As to quaternary structure, binds ribosomal protein uS19.

It is found in the cytoplasm. In terms of biological role, an accessory protein needed during the final step in the assembly of 30S ribosomal subunit, possibly for assembly of the head region. Essential for efficient processing of 16S rRNA. May be needed both before and after RbfA during the maturation of 16S rRNA. It has affinity for free ribosomal 30S subunits but not for 70S ribosomes. The chain is Ribosome maturation factor RimM from Streptomyces coelicolor (strain ATCC BAA-471 / A3(2) / M145).